Reading from the N-terminus, the 179-residue chain is MKQFLDFLPLVVFFAFYKIYDIYAATAALIVATAIVLIYSWVRFRKVEKMALITFVLVVVFGGLTLFFHNDEFIKWKVTVIYALFAGALLVSQWVMKKPLIQRMLGKELSLPQPVWSKLNLAWAVFFILCGLANIYIAFWLPQNIWVNFKVFGLTALTLIFTLLSGVYIYRHLPQDDKS.

Helical transmembrane passes span 22–42 (IYAA…YSWV), 50–70 (MALI…FFHN), 76–96 (WKVT…QWVM), 121–141 (LAWA…AFWL), and 149–169 (FKVF…GVYI).

The protein belongs to the YciB family.

The protein resides in the cell inner membrane. Functionally, plays a role in cell envelope biogenesis, maintenance of cell envelope integrity and membrane homeostasis. The sequence is that of Inner membrane-spanning protein YciB from Escherichia fergusonii (strain ATCC 35469 / DSM 13698 / CCUG 18766 / IAM 14443 / JCM 21226 / LMG 7866 / NBRC 102419 / NCTC 12128 / CDC 0568-73).